The sequence spans 603 residues: Isovalerate--CoA ligase AAE2 (603 aa).

Belongs to the ATP-dependent AMP-binding enzyme family. Expressed at low levels in leaves, flowers and developing seeds.

The catalysed reaction is 3-methylbutanoate + ATP + CoA = 3-methylbutanoyl-CoA + AMP + diphosphate. It catalyses the reaction hexanoate + ATP + CoA = hexanoyl-CoA + AMP + diphosphate. It carries out the reaction butanoate + ATP + CoA = butanoyl-CoA + AMP + diphosphate. The enzyme catalyses pentanoate + ATP + CoA = pentanoyl-CoA + AMP + diphosphate. The catalysed reaction is 3-methylpentanoate + ATP + CoA = 3-methylpentanoyl-CoA + AMP + diphosphate. It catalyses the reaction 4-methylpentanoate + ATP + CoA = 4-methylpentanoyl-CoA + AMP + diphosphate. Functionally, catalyzes the ligation of CoA on isovalerate to produce 3-methylbutanoyl-CoA. Can also use butanoate, pentanoate, hexanoate, 3-methylpentanoate and 4-methylpentanoate as substrates with a lower efficiency. The chain is Isovalerate--CoA ligase AAE2 from Arabidopsis thaliana (Mouse-ear cress).